The sequence spans 119 residues: Large ribosomal subunit protein bL17 (119 aa).

The protein belongs to the bacterial ribosomal protein bL17 family. As to quaternary structure, part of the 50S ribosomal subunit. Contacts protein L32.

The polypeptide is Large ribosomal subunit protein bL17 (Acholeplasma laidlawii (strain PG-8A)).